Consider the following 170-residue polypeptide: Cytochrome b6-f complex subunit 4 (170 aa).

A run of 3 helical transmembrane segments spans residues 46–66, 105–125, and 141–161; these read LLFM…GLSV, LLGI…PFIE, and TVFL…TLPL.

Belongs to the cytochrome b family. PetD subfamily. In terms of assembly, the 4 large subunits of the cytochrome b6-f complex are cytochrome b6, subunit IV (17 kDa polypeptide, PetD), cytochrome f and the Rieske protein, while the 4 small subunits are PetG, PetL, PetM and PetN. The complex functions as a dimer.

Its subcellular location is the cellular thylakoid membrane. Component of the cytochrome b6-f complex, which mediates electron transfer between photosystem II (PSII) and photosystem I (PSI), cyclic electron flow around PSI, and state transitions. The sequence is that of Cytochrome b6-f complex subunit 4 from Synechococcus sp. (strain JA-2-3B'a(2-13)) (Cyanobacteria bacterium Yellowstone B-Prime).